The sequence spans 637 residues: Sphingomyelin phosphodiesterase B (637 aa).

The N-terminal stretch at Met-1–Ser-20 is a signal peptide. Asn-73 is a glycosylation site (N-linked (GlcNAc...) asparagine). Residues Asn-73–Pro-155 form the Saposin B-type domain. 3 cysteine pairs are disulfide-bonded: Cys-77-Cys-151, Cys-80-Cys-145, and Cys-108-Cys-119. Asn-128 and Asn-157 each carry an N-linked (GlcNAc...) asparagine glycan. Residues Asp-191 and His-193 each contribute to the Zn(2+) site. The cysteines at positions 212 and 233 are disulfide-linked. Residue Asp-263 coordinates Zn(2+). N-linked (GlcNAc...) asparagine glycosylation occurs at Asn-279. Position 304 (Asn-304) interacts with Zn(2+). An N-linked (GlcNAc...) asparagine glycan is attached at Asn-377. Positions 407, 441, and 443 each coordinate Zn(2+). Residues Asn-523 and Asn-546 are each glycosylated (N-linked (GlcNAc...) asparagine). A disulfide bridge links Cys-582 with Cys-595. The N-linked (GlcNAc...) asparagine glycan is linked to Asn-606.

It belongs to the acid sphingomyelinase family. Requires Zn(2+) as cofactor.

It localises to the secreted. In terms of biological role, converts sphingomyelin to ceramide. The polypeptide is Sphingomyelin phosphodiesterase B (sgmB) (Dictyostelium discoideum (Social amoeba)).